The primary structure comprises 94 residues: Co-chaperonin GroES (94 aa).

Belongs to the GroES chaperonin family. As to quaternary structure, heptamer of 7 subunits arranged in a ring. Interacts with the chaperonin GroEL.

The protein localises to the cytoplasm. Together with the chaperonin GroEL, plays an essential role in assisting protein folding. The GroEL-GroES system forms a nano-cage that allows encapsulation of the non-native substrate proteins and provides a physical environment optimized to promote and accelerate protein folding. GroES binds to the apical surface of the GroEL ring, thereby capping the opening of the GroEL channel. This Lactococcus lactis subsp. cremoris (strain MG1363) protein is Co-chaperonin GroES.